Reading from the N-terminus, the 460-residue chain is NADH-ubiquinone oxidoreductase chain 4 (460 aa).

13 helical membrane-spanning segments follow: residues tryptophan 22–phenylalanine 42, isoleucine 59–leucine 79, glutamine 93–alanine 113, threonine 114–isoleucine 134, threonine 148–methionine 168, phenylalanine 195–leucine 215, proline 225–methionine 245, methionine 258–leucine 278, leucine 286–threonine 306, phenylalanine 310–leucine 330, valine 351–proline 371, isoleucine 394–methionine 414, and leucine 440–phenylalanine 460.

The protein belongs to the complex I subunit 4 family.

The protein resides in the mitochondrion membrane. The enzyme catalyses a ubiquinone + NADH + 5 H(+)(in) = a ubiquinol + NAD(+) + 4 H(+)(out). Core subunit of the mitochondrial membrane respiratory chain NADH dehydrogenase (Complex I) that is believed to belong to the minimal assembly required for catalysis. Complex I functions in the transfer of electrons from NADH to the respiratory chain. The immediate electron acceptor for the enzyme is believed to be ubiquinone. This Squalus acanthias (Spiny dogfish) protein is NADH-ubiquinone oxidoreductase chain 4 (MT-ND4).